We begin with the raw amino-acid sequence, 487 residues long: Glutamyl-tRNA(Gln) amidotransferase subunit A (487 aa).

Active-site charge relay system residues include Lys-76 and Ser-151. Ser-175 serves as the catalytic Acyl-ester intermediate.

Belongs to the amidase family. GatA subfamily. In terms of assembly, heterotrimer of A, B and C subunits.

It carries out the reaction L-glutamyl-tRNA(Gln) + L-glutamine + ATP + H2O = L-glutaminyl-tRNA(Gln) + L-glutamate + ADP + phosphate + H(+). Its function is as follows. Allows the formation of correctly charged Gln-tRNA(Gln) through the transamidation of misacylated Glu-tRNA(Gln) in organisms which lack glutaminyl-tRNA synthetase. The reaction takes place in the presence of glutamine and ATP through an activated gamma-phospho-Glu-tRNA(Gln). The chain is Glutamyl-tRNA(Gln) amidotransferase subunit A from Azoarcus sp. (strain BH72).